Reading from the N-terminus, the 304-residue chain is Oxygen-dependent coproporphyrinogen-III oxidase (304 aa).

Ser95 contacts substrate. A divalent metal cation-binding residues include His99 and His109. His109 serves as the catalytic Proton donor. Position 111-113 (111-113 (NVR)) interacts with substrate. A divalent metal cation-binding residues include His148 and His178. Positions 243-278 (YVEFNLVYDRGTLFGLQSGGRTESILMSLPPLVRWR) are important for dimerization. 261-263 (GGR) lines the substrate pocket.

Belongs to the aerobic coproporphyrinogen-III oxidase family. Homodimer. It depends on a divalent metal cation as a cofactor.

The protein resides in the cytoplasm. The catalysed reaction is coproporphyrinogen III + O2 + 2 H(+) = protoporphyrinogen IX + 2 CO2 + 2 H2O. The protein operates within porphyrin-containing compound metabolism; protoporphyrin-IX biosynthesis; protoporphyrinogen-IX from coproporphyrinogen-III (O2 route): step 1/1. In terms of biological role, involved in the heme biosynthesis. Catalyzes the aerobic oxidative decarboxylation of propionate groups of rings A and B of coproporphyrinogen-III to yield the vinyl groups in protoporphyrinogen-IX. The protein is Oxygen-dependent coproporphyrinogen-III oxidase of Thioalkalivibrio sulfidiphilus (strain HL-EbGR7).